Reading from the N-terminus, the 711-residue chain is Far upstream element-binding protein 2 (711 aa).

The disordered stretch occupies residues 1–147 (MSDYSTGGPP…HPPPRTSMTE (147 aa)). The residue at position 2 (Ser2) is an N-acetylserine. Pro residues predominate over residues 8 to 17 (GPPPGPPPPA). Gly residues-rich tracts occupy residues 18–28 (GGGGGAGGAGG) and 36–68 (GAGDRGGGGPGGGGPGGGSAGGPSQPPGGGGPG). Arg40 is modified (omega-N-methylarginine). An N6-acetyllysine modification is found at Lys87. Ser99 carries the phosphoserine modification. Thr100 is subject to Phosphothreonine. The segment covering 110–122 (RQLEDGDQPESKK) has biased composition (basic and acidic residues). Lys121 is covalently cross-linked (Glycyl lysine isopeptide (Lys-Gly) (interchain with G-Cter in SUMO1); alternate). Lys121 is covalently cross-linked (Glycyl lysine isopeptide (Lys-Gly) (interchain with G-Cter in SUMO2); alternate). A phosphoserine mark is found at Ser125, Ser129, Ser131, Ser181, Ser184, Ser193, and Ser274. KH domains lie at 144–208 (SMTE…KMML), 233–299 (GTVQ…CEMV), and 322–386 (GGGI…ARII). Residues 392-429 (SLRSGPPGPPGGPGMPPGGRGRGRGQGNWGPPGGEMTF) are disordered. Residues 397-407 (PPGPPGGPGMP) show a composition bias toward pro residues. The segment covering 408–424 (PGGRGRGRGQGNWGPPG) has biased composition (gly residues). An omega-N-methylarginine mark is found at Arg411, Arg413, Arg415, and Arg442. The 68-residue stretch at 424-491 (GGEMTFSIPT…QQIDHAKQLI (68 aa)) folds into the KH 4 domain. Ser480 is subject to Phosphoserine. The disordered stretch occupies residues 497–569 (GPLCPVGPGP…HDPSKAAAAA (73 aa)). 2 stretches are compositionally biased toward pro residues: residues 501 to 520 (PVGPGPGGPGPAGPMGPFNP) and 528 to 542 (PGAPPHAGGPPPHQY). The stretch at 571-582 (DPNAAWAAYYSH) is repeat 1. Positions 571–684 (DPNAAWAAYY…SAAWAEYYRQ (114 aa)) are 4 X 12 AA imperfect repeats. A disordered region spans residues 583–711 (YYQQPPGPVP…PTQQGQQQAQ (129 aa)). Positions 587 to 613 (PPGPVPGPAPAPAAPPAQGEPPQPPPT) are enriched in pro residues. Repeat copies occupy residues 617–628 (DYTKAWEEYYKK), 643–654 (DYTKAWEEYYKK), and 673–684 (DYSAAWAEYYRQ).

This sequence belongs to the KHSRP family. As to quaternary structure, part of a ternary complex containing FUBP2, PTBP1, PTBP2 and HNRPH1. Interacts with PARN. Interacts with PQBP1. Post-translationally, phosphorylation at Ser-193 leads to the unfolding of the unstable KH domain 1, creating a site for 14-3-3 YWHAZ binding, which promotes nuclear localization and impairs the RNA degradation function. In terms of tissue distribution, detected in neural and non-neural cell lines.

It is found in the nucleus. Its subcellular location is the cytoplasm. Its function is as follows. Binds to the dendritic targeting element and may play a role in mRNA trafficking. Part of a ternary complex that binds to the downstream control sequence (DCS) of the pre-mRNA. Mediates exon inclusion in transcripts that are subject to tissue-specific alternative splicing. May interact with single-stranded DNA from the far-upstream element (FUSE). May activate gene expression. Also involved in degradation of inherently unstable mRNAs that contain AU-rich elements (AREs) in their 3'-UTR, possibly by recruiting degradation machinery to ARE-containing mRNAs. This chain is Far upstream element-binding protein 2 (KHSRP), found in Homo sapiens (Human).